Here is a 725-residue protein sequence, read N- to C-terminus: Golgin candidate 4 (725 aa).

Positions 17–62 (HDVHDDDEDDDEDLTIYGSTNGGTDRRNSNGFRYSRSPMANGFESP) are disordered. A compositionally biased stretch (acidic residues) spans 21–30 (DDDEDDDEDL). Residues 66 to 132 (EIERYKAEIN…LKESRLDLSR (67 aa)) are a coiled coil. 3 disordered regions span residues 134-183 (SNNN…SHKK), 191-210 (LEER…EKER), and 311-349 (ASQK…KEDM). Residues 148 to 175 (NRSQRSPTNWKNRNQMNNGIASKPNGTE) are compositionally biased toward polar residues. Coiled coils occupy residues 191-316 (LEER…QKST), 344-407 (PGKE…QTNE), and 437-563 (EIRK…LNRM). Residues 324-349 (STEDLSRHLSSLDEEKAGTFPGKEDM) show a composition bias toward basic and acidic residues. The 52-residue stretch at 562–613 (RMSMDSDFLVDRRIVIKLLVTYFQRNHSREVLDLMVRMLGFSEEEKQRIGLA) folds into the GRIP domain. The segment covering 672–688 (ERERREAEDAANKEQEK) has biased composition (basic and acidic residues). The interval 672-725 (ERERREAEDAANKEQEKATVSSTQRPKYEQSDSEFSTVPLTSSNSNHRLSRLLT) is disordered. Residues 711–725 (LTSSNSNHRLSRLLT) show a composition bias toward low complexity.

It is found in the golgi apparatus. Golgi matrix protein playing a role in tethering of vesicles to Golgi membranes and in maintaining the overall structure of the Golgi apparatus. In Arabidopsis thaliana (Mouse-ear cress), this protein is Golgin candidate 4 (GC4).